Reading from the N-terminus, the 66-residue chain is ATP synthase F(0) complex subunit 8 (66 aa).

At M1 the chain carries N-formylmethionine. Residues 8 to 24 (TWLTMILSMFLTLFIIF) traverse the membrane as a helical segment. K54 is subject to N6-acetyllysine; alternate. The residue at position 54 (K54) is an N6-succinyllysine; alternate. N6-acetyllysine is present on K57.

It belongs to the ATPase protein 8 family. In terms of assembly, component of the ATP synthase complex composed at least of ATP5F1A/subunit alpha, ATP5F1B/subunit beta, ATP5MC1/subunit c (homooctomer), MT-ATP6/subunit a, MT-ATP8/subunit 8, ATP5ME/subunit e, ATP5MF/subunit f, ATP5MG/subunit g, ATP5MK/subunit k, ATP5MJ/subunit j, ATP5F1C/subunit gamma, ATP5F1D/subunit delta, ATP5F1E/subunit epsilon, ATP5PF/subunit F6, ATP5PB/subunit b, ATP5PD/subunit d, ATP5PO/subunit OSCP. ATP synthase complex consists of a soluble F(1) head domain (subunits alpha(3) and beta(3)) - the catalytic core - and a membrane F(0) domain - the membrane proton channel (subunits c, a, 8, e, f, g, k and j). These two domains are linked by a central stalk (subunits gamma, delta, and epsilon) rotating inside the F1 region and a stationary peripheral stalk (subunits F6, b, d, and OSCP). Interacts with PRICKLE3.

It is found in the mitochondrion membrane. Functionally, subunit 8, of the mitochondrial membrane ATP synthase complex (F(1)F(0) ATP synthase or Complex V) that produces ATP from ADP in the presence of a proton gradient across the membrane which is generated by electron transport complexes of the respiratory chain. ATP synthase complex consist of a soluble F(1) head domain - the catalytic core - and a membrane F(1) domain - the membrane proton channel. These two domains are linked by a central stalk rotating inside the F(1) region and a stationary peripheral stalk. During catalysis, ATP synthesis in the catalytic domain of F(1) is coupled via a rotary mechanism of the central stalk subunits to proton translocation. In vivo, can only synthesize ATP although its ATP hydrolase activity can be activated artificially in vitro. Part of the complex F(0) domain. The polypeptide is ATP synthase F(0) complex subunit 8 (Bos taurus (Bovine)).